The following is a 538-amino-acid chain: Phosphatidylethanolamine transferase Mcr-2 (538 aa).

5 helical membrane-spanning segments follow: residues 14–34 (PFVLMGLVALFLAATANLTFF), 47–67 (LGFIISMAVAVMGAMLLIVVL), 72–92 (YVLKPVLILLLIMGAVTSYFT), 121–141 (LAFFVRIIGLGVLPSVLVAVA), and 161–181 (VSLVLLLVPIGLFSSQYASFF). Zn(2+) is bound by residues Glu-244 and Thr-283. 3 disulfide bridges follow: Cys-279/Cys-289, Cys-354/Cys-362, and Cys-412/Cys-420. Position 283 is a phosphothreonine (Thr-283). 2 residues coordinate Zn(2+): Asp-463 and His-464.

Belongs to the phosphoethanolamine transferase family. Monomer. In terms of processing, phosphorylated at Thr-283; may represent an intermediate in the catalytic mechanism.

The protein resides in the cell inner membrane. It catalyses the reaction lipid A (E. coli) + a 1,2-diacyl-sn-glycero-3-phosphoethanolamine + H(+) = lipid A 4'-(2-aminoethyl diphosphate) (E. coli) + a 1,2-diacyl-sn-glycerol. Probably catalyzes the addition of a phosphoethanolamine moiety to lipid A. Phosphoethanolamine modification of lipid A confers polymyxin resistance. Confers resistance to polymyxin-type antibiotics such as colistin. The sequence is that of Phosphatidylethanolamine transferase Mcr-2 from Escherichia coli.